Reading from the N-terminus, the 421-residue chain is Synaptotagmin-1 (421 aa).

Residues 1-40 (MVSESHHEALAAPPATTVAAAPPSNVTEPASPGGGGGKED) are disordered. Topologically, residues 1-60 (MVSESHHEALAAPPATTVAAAPPSNVTEPASPGGGGGKEDAFSKLKEKFMNELNKIPLPP) are vesicular. Residues 10 to 23 (LAAPPATTVAAAPP) are compositionally biased toward low complexity. Asparagine 25 carries an N-linked (GlcNAc...) asparagine glycan. A helical membrane pass occupies residues 61-81 (WALIAIAIVAVLLILTCCFCL). Residues cysteine 77, cysteine 78, cysteine 80, cysteine 82, and cysteine 85 are each lipidated (S-palmitoyl cysteine). The Cytoplasmic segment spans residues 82-421 (CKKCLFKKKN…EVDAMLAVKK (340 aa)). A disordered region spans residues 94-139 (KGKEKGGKNAINMKDVKDLGKTMKDQDDDAETGLTDGEEKEEPKEV). Over residues 107-118 (KDVKDLGKTMKD) the composition is skewed to basic and acidic residues. The span at 119–133 (QDDDAETGLTDGEEK) shows a compositional bias: acidic residues. The segment at 135–381 (EPKEVEKLGK…AIGKVFVGYN (247 aa)) is phospholipid binding. 2 consecutive C2 domains span residues 141 to 260 (KLGK…EEWR) and 272 to 405 (KLGD…AQWH). Ca(2+)-binding residues include leucine 171, aspartate 172, aspartate 178, aspartate 230, phenylalanine 231, aspartate 232, serine 235, lysine 236, aspartate 238, aspartate 303, aspartate 309, aspartate 363, aspartate 365, and aspartate 371.

It belongs to the synaptotagmin family. In terms of assembly, homotetramer. The cofactor is Ca(2+).

The protein resides in the cytoplasmic vesicle. It localises to the secretory vesicle membrane. The protein localises to the secretory vesicle. It is found in the synaptic vesicle membrane. Its subcellular location is the chromaffin granule membrane. The protein resides in the cytoplasm. Functionally, calcium sensor that participates in triggering neurotransmitter release at the synapse. May have a regulatory role in the membrane interactions during trafficking of synaptic vesicles at the active zone of the synapse. It binds acidic phospholipids with a specificity that requires the presence of both an acidic head group and a diacyl backbone. May play a role in dendrite formation by melanocytes. May play a role in regulating the secretion of hormones relevant to the reproduction and egg-laying of female geese. The chain is Synaptotagmin-1 from Anser cygnoides (Swan goose).